The following is a 968-amino-acid chain: RNA polymerase-associated protein RapA (968 aa).

In terms of domain architecture, Helicase ATP-binding spans D164–N334. Residue D177–T184 participates in ATP binding. The DEAH box motif lies at D280–H283. Residues R490–G662 enclose the Helicase C-terminal domain.

It belongs to the SNF2/RAD54 helicase family. RapA subfamily. Interacts with the RNAP. Has a higher affinity for the core RNAP than for the holoenzyme. Its ATPase activity is stimulated by binding to RNAP.

Transcription regulator that activates transcription by stimulating RNA polymerase (RNAP) recycling in case of stress conditions such as supercoiled DNA or high salt concentrations. Probably acts by releasing the RNAP, when it is trapped or immobilized on tightly supercoiled DNA. Does not activate transcription on linear DNA. Probably not involved in DNA repair. The polypeptide is RNA polymerase-associated protein RapA (Escherichia coli O139:H28 (strain E24377A / ETEC)).